Reading from the N-terminus, the 330-residue chain is MTHTLRVIFAGTPEFAAAALAAIHKAGFPVPLVLTQPDRPAGRGMKLQASAVKRYAVEHGMAVAQPPSLRRAGKYPAEAADAIELLRTTPHDVMVVAAYGLLLPQEVLDIPRAGCINIHASLLPRWRGAAPIHRAIEAGDAETGVTLMQMDVGLDTGAMIEEARIAIAPDDTTATLHDRLAAAGARLIVDALVRLERDGTLPATPQPADGVTYAEKIGKHEAALDWRKPADVLARQVRAFDPFPGGVATLDGAAIKLWAAEPVAAHGTIATAAPGTIVEAAPEGVVVACGSGALRVTQLQKPGGKRLPAREFLAGSPLAAGQRFALPDVD.

121-124 (SLLP) lines the (6S)-5,6,7,8-tetrahydrofolate pocket.

Belongs to the Fmt family.

The enzyme catalyses L-methionyl-tRNA(fMet) + (6R)-10-formyltetrahydrofolate = N-formyl-L-methionyl-tRNA(fMet) + (6S)-5,6,7,8-tetrahydrofolate + H(+). Functionally, attaches a formyl group to the free amino group of methionyl-tRNA(fMet). The formyl group appears to play a dual role in the initiator identity of N-formylmethionyl-tRNA by promoting its recognition by IF2 and preventing the misappropriation of this tRNA by the elongation apparatus. This is Methionyl-tRNA formyltransferase from Burkholderia orbicola (strain MC0-3).